A 984-amino-acid chain; its full sequence is Ephrin type-B receptor 1 (984 aa).

A signal peptide spans 1 to 17; the sequence is MALDCLLLFLLASAVAA. Residues 18–540 lie on the Extracellular side of the membrane; sequence MEETLMDTRT…YKSELREQLP (523 aa). Residues 19-201 enclose the Eph LBD domain; that stretch reads EETLMDTRTA…FFKKCPSIVQ (183 aa). 2 consecutive Fibronectin type-III domains span residues 322–432 and 433–528; these read VPSG…TNQA and APST…TLTD. N-linked (GlcNAc...) asparagine glycosylation is found at asparagine 334, asparagine 426, and asparagine 480. The chain crosses the membrane as a helical span at residues 541 to 563; it reads LIAGSAAAGVVFVVSLVAISIVC. The Cytoplasmic portion of the chain corresponds to 564–984; the sequence is SRKRAYSKEA…QMNQSPSVMA (421 aa). Tyrosine 600 carries the post-translational modification Phosphotyrosine. Positions 619–882 constitute a Protein kinase domain; sequence VKIEEVIGAG…EIVNTLDKMI (264 aa). ATP is bound by residues 625–633 and lysine 651; that span reads IGAGEFGEV. Aspartate 744 (proton acceptor) is an active-site residue. One can recognise an SAM domain in the interval 911–975; it reads TAFTTVDDWL…LSSIHSMRVQ (65 aa). Tyrosine 928 is modified (phosphotyrosine; by autocatalysis). The PDZ-binding signature appears at 982–984; the sequence is VMA.

This sequence belongs to the protein kinase superfamily. Tyr protein kinase family. Ephrin receptor subfamily. In terms of assembly, heterotetramer upon binding of the ligand. The heterotetramer is composed of an ephrin dimer and a receptor dimer. Oligomerization is probably required to induce biological responses. Interacts with EPHB6; transphosphorylates EPHB6 to form an active signaling complex. Interacts with PICK1. Interacts (through Tyr-594) with NCK1 (via SH2 domain); activates the JUN cascade to regulate cell adhesion. The ligand-activated form interacts (through Tyr-928) with GRB7 and GRB10 (via SH2 domains). The ligand-activated form interacts (residues within the catalytic domain) with GRB2 (via SH2 domain). Interacts with GRB2, SHC1 and SRC; activates the MAPK/ERK cascade to regulate cell migration. Interacts with CBL; regulates receptor degradation through ubiquitination. Interacts with ACP1. Post-translationally, phosphorylated. Autophosphorylation is stimulated by the ligand EFNB1. Required for interaction with SH2 domain-containing interactors, for activation of the MAPK/ERK and JUN signaling cascades and for ubiquitination by CBL. In terms of processing, ubiquitinated; (EFNB1)ligand-induced poly- and/or multi-ubiquitination by CBL is regulated by SRC and leads to lysosomal degradation. In terms of tissue distribution, expressed in neural stem and progenitor cells in the dentate gyrus. Expressed in myogenic progenitor cells.

The protein localises to the cell membrane. The protein resides in the early endosome membrane. It is found in the cell projection. Its subcellular location is the dendrite. It catalyses the reaction L-tyrosyl-[protein] + ATP = O-phospho-L-tyrosyl-[protein] + ADP + H(+). Its function is as follows. Receptor tyrosine kinase which binds promiscuously transmembrane ephrin-B family ligands residing on adjacent cells, leading to contact-dependent bidirectional signaling into neighboring cells. The signaling pathway downstream of the receptor is referred to as forward signaling while the signaling pathway downstream of the ephrin ligand is referred to as reverse signaling. Cognate/functional ephrin ligands for this receptor include EFNB1, EFNB2 and EFNB3. During nervous system development, regulates retinal axon guidance redirecting ipsilaterally ventrotemporal retinal ganglion cells axons at the optic chiasm midline. This probably requires repulsive interaction with EFNB2. In the adult nervous system together with EFNB3, regulates chemotaxis, proliferation and polarity of the hippocampus neural progenitors. In addition to its role in axon guidance also plays an important redundant role with other ephrin-B receptors in development and maturation of dendritic spines and synapse formation. May also regulate angiogenesis. More generally, may play a role in targeted cell migration and adhesion. Upon activation by EFNB1 and probably other ephrin-B ligands activates the MAPK/ERK and the JNK signaling cascades to regulate cell migration and adhesion respectively. Involved in the maintenance of the pool of satellite cells (muscle stem cells) by promoting their self-renewal and reducing their activation and differentiation. This Mus musculus (Mouse) protein is Ephrin type-B receptor 1 (Ephb1).